Reading from the N-terminus, the 125-residue chain is Large-conductance mechanosensitive channel (125 aa).

A run of 3 helical transmembrane segments spans residues 19 to 39 (VGVIIGAAFTAIVKSLVSNLI), 42 to 62 (LIGIFLGKIDLSNLVFSIGSA), and 67 to 87 (GSFLNEVINFLIIAFVVFLMV).

This sequence belongs to the MscL family. As to quaternary structure, homopentamer.

It is found in the cell membrane. In terms of biological role, channel that opens in response to stretch forces in the membrane lipid bilayer. May participate in the regulation of osmotic pressure changes within the cell. This chain is Large-conductance mechanosensitive channel, found in Limosilactobacillus fermentum (strain NBRC 3956 / LMG 18251) (Lactobacillus fermentum).